The primary structure comprises 506 residues: Cytochrome P450 monooxygenase TES1 (506 aa).

Residues 26–46 (MSVVLAGLILLASIYFPRFMF) traverse the membrane as a helical segment. N-linked (GlcNAc...) asparagine glycans are attached at residues asparagine 167, asparagine 201, asparagine 298, and asparagine 427. Cysteine 440 is a heme binding site.

This sequence belongs to the cytochrome P450 family. Heme serves as cofactor.

It localises to the membrane. It functions in the pathway phytotoxin biosynthesis. In terms of biological role, cytochrome P450 monooxygenase; part of the gene cluster that mediates the biosynthesis of the phytotoxin tentoxin, an inhibitor the F1-ATPase activity of chloroplasts, resulting in chlorosis in sensitive plants. Tentoxin is a cyclic tetrapeptide that consists of four amino acid residues: glycine (Gly), alanine (Ala), leucine (Leu), and dehydrophenylalanine (DPhe). In addition, both the Ala and DPhe residues are N-methylated. The nonribosomal peptide synthetase TES assembles tentoxin from the four substrate amino acids. The adenylation domains of each of the 4 modules are responsible for the activation of Gly, Ala, Leu and DPhe, respectively. In addition, the N-methyltransferase domains in the second and fourth modules of TES could be responsible for N-methylation of Ala and DPhe residues. Finally, the condensation domain located in the termination module probably catalyzes the formation of the intramolecular macrocyclization and then the release of tentoxin. The cytochrome P450 monooxygenase TES1 is predicted to be involved in the formation of DPhe. In Alternaria alternata (Alternaria rot fungus), this protein is Cytochrome P450 monooxygenase TES1.